The primary structure comprises 61 residues: Photosystem II reaction center protein K (61 aa).

Residues methionine 1–alanine 24 constitute a propeptide that is removed on maturation. The chain crosses the membrane as a helical span at residues isoleucine 36–alanine 56.

This sequence belongs to the PsbK family. In terms of assembly, PSII is composed of 1 copy each of membrane proteins PsbA, PsbB, PsbC, PsbD, PsbE, PsbF, PsbH, PsbI, PsbJ, PsbK, PsbL, PsbM, PsbT, PsbX, PsbY, PsbZ, Psb30/Ycf12, at least 3 peripheral proteins of the oxygen-evolving complex and a large number of cofactors. It forms dimeric complexes.

It localises to the plastid. The protein resides in the chloroplast thylakoid membrane. One of the components of the core complex of photosystem II (PSII). PSII is a light-driven water:plastoquinone oxidoreductase that uses light energy to abstract electrons from H(2)O, generating O(2) and a proton gradient subsequently used for ATP formation. It consists of a core antenna complex that captures photons, and an electron transfer chain that converts photonic excitation into a charge separation. This chain is Photosystem II reaction center protein K, found in Gossypium barbadense (Sea Island cotton).